Reading from the N-terminus, the 99-residue chain is High mobility group nucleosome-binding domain-containing protein 3 (99 aa).

Composition is skewed to basic and acidic residues over residues 1–25, 39–53, and 62–72; these read MPKRKSPENTEDKDGSKVTKQEPTR, PEPKPRKTSAKKEPG, and GKKEEKQEAGK. A disordered region spans residues 1 to 99; that stretch reads MPKRKSPENT…KTESVDNEGE (99 aa). Serine 6 is subject to Phosphoserine. Threonine 10 carries the phosphothreonine modification. Serine 78 and serine 93 each carry phosphoserine. Over residues 81–93 the composition is skewed to basic and acidic residues; the sequence is GETKAEEAQKTES.

The protein belongs to the HMGN family. In terms of assembly, interacts with the ligand binding domain of the thyroid receptor (TR) (in vitro). Requires the presence of thyroid hormone for its interaction. Interacts with transcriptional regulator SEHBP. Interacts with nucleosomes.

The protein localises to the nucleus. Functionally, binds to nucleosomes, regulating chromatin structure and consequently, chromatin-dependent processes such as transcription, DNA replication and DNA repair. Affects both insulin and glucagon levels and modulates the expression of pancreatic genes involved in insulin secretion. Regulates the expression of the glucose transporter SLC2A2 by binding specifically to its promoter region and recruiting PDX1 and additional transcription factors. Regulates the expression of SLC6A9, a glycine transporter which regulates the glycine concentration in synaptic junctions in the central nervous system, by binding to its transcription start site. May play a role in ocular development and astrocyte function. The sequence is that of High mobility group nucleosome-binding domain-containing protein 3 (HMGN3) from Pongo abelii (Sumatran orangutan).